Here is a 374-residue protein sequence, read N- to C-terminus: MPDIKLKNQASLCASTRLFLAYTSIKPFDVAFHPKEPVVFSSLLTGQVCAWSYDDATGETSSSWSVRPSKRTARALSIEENGDEIWMGGKSGSLLCALTPPKVIQLSTRDGSMTRERDSAHECPINRVYCVNRNLVATGDDDGVIKLWDPRQADSIRTYSQHFDYISDFTYFDDKRQLVATSGDGHLSVIDIRSNKSTPLTVSEDQEDELLSIVPIKGGQKAIVGSGLGILSVWNRQMGWADSVDRIPGHPASIDAIVALTPDIIATGSEDGMIRVIQVLPHKFLGVVATHEEFPVERIRLDRNNKWLGSVSHDECLKLTDVEDLFEDSDEDDEMEEDEPDSDEEKSKKKKKDNGMKDMSRGQAENDGSFFADL.

WD repeat units lie at residues 21 to 61 (AYTS…GETS), 68 to 107 (PSKRTARALSIEENGDEIWMGGKSGSLLCALTPPKVIQLS), 120 to 158 (AHECPINRVYCVNRNLVATGDDDGVIKLWDPRQADSIRT), 161 to 200 (QHFDYISDFTYFDDKRQLVATSGDGHLSVIDIRSNKSTPL), 205 to 244 (DQEDELLSIVPIKGGQKAIVGSGLGILSVWNRQMGWADSV), 249 to 287 (GHPASIDAIVALTPDIIATGSEDGMIRVIQVLPHKFLGV), and 290 to 330 (THEE…EDSD). Over residues 325–344 (LFEDSDEDDEMEEDEPDSDE) the composition is skewed to acidic residues. Residues 325-374 (LFEDSDEDDEMEEDEPDSDEEKSKKKKKDNGMKDMSRGQAENDGSFFADL) are disordered.

Belongs to the WD repeat WDR55 family.

The protein localises to the nucleus. It is found in the nucleolus. In Cryptococcus neoformans var. neoformans serotype D (strain B-3501A) (Filobasidiella neoformans), this protein is WD repeat-containing protein JIP5 (JIP5).